A 544-amino-acid chain; its full sequence is Chaperonin GroEL 1 (544 aa).

Residues 29–32, 86–90, Gly-413, 479–481, and Asp-495 contribute to the ATP site; these read TLGP, DGTTT, and NAA. The disordered stretch occupies residues 525-544; it reads PEPKDNAPAGAGAGGGDFDY. A compositionally biased stretch (gly residues) spans 535–544; sequence AGAGGGDFDY.

Belongs to the chaperonin (HSP60) family. Forms a cylinder of 14 subunits composed of two heptameric rings stacked back-to-back. Interacts with the co-chaperonin GroES.

It localises to the cytoplasm. It catalyses the reaction ATP + H2O + a folded polypeptide = ADP + phosphate + an unfolded polypeptide.. Together with its co-chaperonin GroES, plays an essential role in assisting protein folding. The GroEL-GroES system forms a nano-cage that allows encapsulation of the non-native substrate proteins and provides a physical environment optimized to promote and accelerate protein folding. This Nostoc sp. (strain PCC 7120 / SAG 25.82 / UTEX 2576) protein is Chaperonin GroEL 1.